Here is a 727-residue protein sequence, read N- to C-terminus: NADH-ubiquinone oxidoreductase 75 kDa subunit, mitochondrial (727 aa).

The N-terminal 23 residues, 1–23, are a transit peptide targeting the mitochondrion; that stretch reads MLRIPVRKALVGLSKSPKGCVRT. Residues 30 to 108 enclose the 2Fe-2S ferredoxin-type domain; sequence NLIEVFVDGQ…GWNILTNSEK (79 aa). Positions 64, 75, and 78 each coordinate [2Fe-2S] cluster. At lysine 84 the chain carries N6-acetyllysine. Residue cysteine 92 coordinates [2Fe-2S] cluster. Residues 108–147 enclose the 4Fe-4S His(Cys)3-ligated-type domain; that stretch reads KSKKAREGVMEFLLANHPLDCPICDQGGECDLQDQSMMFG. The [4Fe-4S] cluster site is built by histidine 124, cysteine 128, cysteine 131, cysteine 137, cysteine 176, cysteine 179, cysteine 182, and cysteine 226. One can recognise a 4Fe-4S Mo/W bis-MGD-type domain in the interval 245 to 301; that stretch reads TRKTESIDVMDAVGSNIVVSTRTGEVMRILPRMHEDINEXWISDKTRFAYDGLKRQR. N6-acetyllysine occurs at positions 467, 499, and 709.

It belongs to the complex I 75 kDa subunit family. Core subunit of respiratory chain NADH dehydrogenase (Complex I) which is composed of 45 different subunits. This is the largest subunit of complex I and it is a component of the iron-sulfur (IP) fragment of the enzyme. Complex I associates with ubiquinol-cytochrome reductase complex (Complex III) to form supercomplexes. Interacts with MDM2 and AKAP1. [2Fe-2S] cluster is required as a cofactor. The cofactor is [4Fe-4S] cluster.

Its subcellular location is the mitochondrion inner membrane. It catalyses the reaction a ubiquinone + NADH + 5 H(+)(in) = a ubiquinol + NAD(+) + 4 H(+)(out). Its function is as follows. Core subunit of the mitochondrial membrane respiratory chain NADH dehydrogenase (Complex I) which catalyzes electron transfer from NADH through the respiratory chain, using ubiquinone as an electron acceptor. Essential for catalysing the entry and efficient transfer of electrons within complex I. Plays a key role in the assembly and stability of complex I and participates in the association of complex I with ubiquinol-cytochrome reductase complex (Complex III) to form supercomplexes. The sequence is that of NADH-ubiquinone oxidoreductase 75 kDa subunit, mitochondrial (NDUFS1) from Gorilla gorilla gorilla (Western lowland gorilla).